Here is a 108-residue protein sequence, read N- to C-terminus: Large ribosomal subunit protein bL31B (108 aa).

A disordered region spans residues 86–108; that stretch reads KPETVVEDVLPKGKKKSPAKKKK. Residues 97–108 are compositionally biased toward basic residues; it reads KGKKKSPAKKKK.

This sequence belongs to the bacterial ribosomal protein bL31 family. Type B subfamily. As to quaternary structure, part of the 50S ribosomal subunit.

This chain is Large ribosomal subunit protein bL31B, found in Chlamydia trachomatis serovar L2 (strain ATCC VR-902B / DSM 19102 / 434/Bu).